The chain runs to 468 residues: UDP-N-acetylmuramoyl-L-alanine--L-glutamate ligase (468 aa).

Residue 122–128 (GTKGKST) coordinates ATP.

The protein belongs to the MurCDEF family. MurD2 subfamily.

The protein localises to the cytoplasm. It carries out the reaction UDP-N-acetyl-alpha-D-muramoyl-L-alanine + L-glutamate + ATP = UDP-N-acetyl-alpha-D-muramoyl-L-alanyl-L-glutamate + ADP + phosphate + H(+). The protein operates within cell wall biogenesis; peptidoglycan biosynthesis. Cell wall formation. Catalyzes the addition of L-glutamate to the nucleotide precursor UDP-N-acetylmuramoyl-L-alanine. This Xanthomonas euvesicatoria pv. vesicatoria (strain 85-10) (Xanthomonas campestris pv. vesicatoria) protein is UDP-N-acetylmuramoyl-L-alanine--L-glutamate ligase.